We begin with the raw amino-acid sequence, 113 residues long: U11-theraphotoxin-Hhn1g (113 aa).

Residues 1 to 21 (MNTVRVTFLLVFVLAVSLGQA) form the signal peptide. The propeptide occupies 22-74 (DKDENRMEMQEKTEQGKSYLDFAENLLLQKLEELEAKLLEEDSEESRNSRQKR). A disordered region spans residues 61–83 (EEDSEESRNSRQKRCIGEGVPCD). 3 cysteine pairs are disulfide-bonded: Cys-75–Cys-90, Cys-82–Cys-95, and Cys-89–Cys-110.

Belongs to the neurotoxin 14 (magi-1) family. 01 (HNTX-16) subfamily. In terms of tissue distribution, expressed by the venom gland.

The protein localises to the secreted. Probable ion channel inhibitor. The protein is U11-theraphotoxin-Hhn1g of Cyriopagopus hainanus (Chinese bird spider).